We begin with the raw amino-acid sequence, 35 residues long: MKIGIIGAMEEEVTLLRDKIENRQTITIGGSEIYT.

Catalysis depends on Glu12, which acts as the Proton acceptor.

The protein belongs to the PNP/UDP phosphorylase family. MtnN subfamily. In terms of assembly, homodimer.

It catalyses the reaction S-adenosyl-L-homocysteine + H2O = S-(5-deoxy-D-ribos-5-yl)-L-homocysteine + adenine. It carries out the reaction S-methyl-5'-thioadenosine + H2O = 5-(methylsulfanyl)-D-ribose + adenine. The catalysed reaction is 5'-deoxyadenosine + H2O = 5-deoxy-D-ribose + adenine. It functions in the pathway amino-acid biosynthesis; L-methionine biosynthesis via salvage pathway; S-methyl-5-thio-alpha-D-ribose 1-phosphate from S-methyl-5'-thioadenosine (hydrolase route): step 1/2. Its function is as follows. Catalyzes the irreversible cleavage of the glycosidic bond in both 5'-methylthioadenosine (MTA) and S-adenosylhomocysteine (SAH/AdoHcy) to adenine and the corresponding thioribose, 5'-methylthioribose and S-ribosylhomocysteine, respectively. Also cleaves 5'-deoxyadenosine, a toxic by-product of radical S-adenosylmethionine (SAM) enzymes, into 5-deoxyribose and adenine. Thus, is required for in vivo function of the radical SAM enzymes biotin synthase and lipoic acid synthase, that are inhibited by 5'-deoxyadenosine accumulation. The protein is 5'-methylthioadenosine/S-adenosylhomocysteine nucleosidase (mtnN) of Klebsiella pneumoniae.